A 188-amino-acid polypeptide reads, in one-letter code: Elongation factor P (188 aa).

An N6-(3,6-diaminohexanoyl)-5-hydroxylysine modification is found at K34.

The protein belongs to the elongation factor P family. In terms of processing, may be beta-lysylated on the epsilon-amino group of Lys-34 by the combined action of EpmA and EpmB, and then hydroxylated on the C5 position of the same residue by EpmC (if this protein is present). Lysylation is critical for the stimulatory effect of EF-P on peptide-bond formation. The lysylation moiety may extend toward the peptidyltransferase center and stabilize the terminal 3-CCA end of the tRNA. Hydroxylation of the C5 position on Lys-34 may allow additional potential stabilizing hydrogen-bond interactions with the P-tRNA.

The protein resides in the cytoplasm. Its pathway is protein biosynthesis; polypeptide chain elongation. Functionally, involved in peptide bond synthesis. Alleviates ribosome stalling that occurs when 3 or more consecutive Pro residues or the sequence PPG is present in a protein, possibly by augmenting the peptidyl transferase activity of the ribosome. Modification of Lys-34 is required for alleviation. The chain is Elongation factor P from Vibrio parahaemolyticus serotype O3:K6 (strain RIMD 2210633).